The sequence spans 64 residues: Small ribosomal subunit protein bS21 (64 aa).

The interval 37-64 is disordered; it reads EKPSVKRKRKEKEAQRRLRKKMRMMKKA. Over residues 53 to 64 the composition is skewed to basic residues; that stretch reads RLRKKMRMMKKA.

This sequence belongs to the bacterial ribosomal protein bS21 family.

The polypeptide is Small ribosomal subunit protein bS21 (Syntrophotalea carbinolica (strain DSM 2380 / NBRC 103641 / GraBd1) (Pelobacter carbinolicus)).